We begin with the raw amino-acid sequence, 796 residues long: Lon protease (796 aa).

The Lon N-terminal domain occupies 19-213 (LPVVVTRGIF…LLKELIINRP (195 aa)). 376–383 (GPPGVGKT) lines the ATP pocket. Residues 612-793 (ESQVGVVTGL…EDVYEIIFKN (182 aa)) enclose the Lon proteolytic domain. Catalysis depends on residues serine 699 and lysine 742.

This sequence belongs to the peptidase S16 family. In terms of assembly, homohexamer. Organized in a ring with a central cavity.

It is found in the cytoplasm. It carries out the reaction Hydrolysis of proteins in presence of ATP.. Its function is as follows. ATP-dependent serine protease that mediates the selective degradation of mutant and abnormal proteins as well as certain short-lived regulatory proteins. Required for cellular homeostasis and for survival from DNA damage and developmental changes induced by stress. Degrades polypeptides processively to yield small peptide fragments that are 5 to 10 amino acids long. Binds to DNA in a double-stranded, site-specific manner. This is Lon protease from Mycoplasma mycoides subsp. mycoides SC (strain CCUG 32753 / NCTC 10114 / PG1).